A 360-amino-acid chain; its full sequence is Protein pelota homolog (360 aa).

The protein belongs to the eukaryotic release factor 1 family. Pelota subfamily. In terms of assembly, monomer. A divalent metal cation serves as cofactor.

The protein localises to the cytoplasm. Its function is as follows. May function in recognizing stalled ribosomes, interact with stem-loop structures in stalled mRNA molecules, and effect endonucleolytic cleavage of the mRNA. May play a role in the release non-functional ribosomes and degradation of damaged mRNAs. Has endoribonuclease activity. The protein is Protein pelota homolog of Hyperthermus butylicus (strain DSM 5456 / JCM 9403 / PLM1-5).